The chain runs to 299 residues: Oxygen-dependent coproporphyrinogen-III oxidase (299 aa).

Substrate is bound at residue Ser92. The a divalent metal cation site is built by His96 and His106. His106 serves as the catalytic Proton donor. Position 108–110 (108–110) interacts with substrate; it reads NVR. A divalent metal cation is bound by residues His145 and His175. Residues 240–275 form an important for dimerization region; that stretch reads YVEFNLVWDRGTLFGLQTGGRTESILMSMPPLVRWE. 258 to 260 is a binding site for substrate; it reads GGR.

Belongs to the aerobic coproporphyrinogen-III oxidase family. As to quaternary structure, homodimer. A divalent metal cation serves as cofactor.

It is found in the cytoplasm. The catalysed reaction is coproporphyrinogen III + O2 + 2 H(+) = protoporphyrinogen IX + 2 CO2 + 2 H2O. Its pathway is porphyrin-containing compound metabolism; protoporphyrin-IX biosynthesis; protoporphyrinogen-IX from coproporphyrinogen-III (O2 route): step 1/1. Involved in the heme biosynthesis. Catalyzes the aerobic oxidative decarboxylation of propionate groups of rings A and B of coproporphyrinogen-III to yield the vinyl groups in protoporphyrinogen-IX. This chain is Oxygen-dependent coproporphyrinogen-III oxidase, found in Enterobacter sp. (strain 638).